We begin with the raw amino-acid sequence, 111 residues long: Small ribosomal subunit protein uS10 (111 aa).

Belongs to the universal ribosomal protein uS10 family. As to quaternary structure, part of the 30S ribosomal subunit.

In terms of biological role, involved in the binding of tRNA to the ribosomes. The chain is Small ribosomal subunit protein uS10 from Xanthomonas euvesicatoria pv. vesicatoria (strain 85-10) (Xanthomonas campestris pv. vesicatoria).